The following is a 502-amino-acid chain: Arabinose import ATP-binding protein AraG (502 aa).

2 consecutive ABC transporter domains span residues 6–241 and 252–497; these read LEFD…MVGR and REVG…MVES. ATP is bound at residue 38–45; the sequence is GENGAGKS.

The protein belongs to the ABC transporter superfamily. Arabinose importer (TC 3.A.1.2.2) family. The complex is composed of two ATP-binding proteins (AraG), two transmembrane proteins (AraH) and a solute-binding protein (AraF).

It localises to the cell inner membrane. It catalyses the reaction L-arabinose(out) + ATP + H2O = L-arabinose(in) + ADP + phosphate + H(+). Part of the ABC transporter complex AraFGH involved in arabinose import. Responsible for energy coupling to the transport system. The chain is Arabinose import ATP-binding protein AraG from Mannheimia succiniciproducens (strain KCTC 0769BP / MBEL55E).